A 334-amino-acid polypeptide reads, in one-letter code: Immune-associated nucleotide-binding protein 3 (334 aa).

Residues 11-219 (KAVKNIVLVG…FRGKMYLEIK (209 aa)) enclose the AIG1-type G domain. Positions 20–27 (GRTGNGKS) are G1. GTP contacts are provided by residues 20 to 28 (GRTGNGKSA) and S41. The segment at 47 to 51 (GVTKT) is G2. Residues 69-72 (DTPG) form a G3 region. Residues 139 to 142 (TGGD) are G4. The interval 178–180 (NNM) is G5. N179 serves as a coordination point for GTP. Positions 272-306 (SAAHERMVSMLNENLENAHRENIDLRKAHDHEQKK) form a coiled coil.

The protein belongs to the TRAFAC class TrmE-Era-EngA-EngB-Septin-like GTPase superfamily. AIG1/Toc34/Toc159-like paraseptin GTPase family. IAN subfamily. In terms of tissue distribution, mostly expressed in pollen. Also detected in lateral roots and radicles.

This chain is Immune-associated nucleotide-binding protein 3, found in Arabidopsis thaliana (Mouse-ear cress).